Here is a 207-residue protein sequence, read N- to C-terminus: ATP-dependent Clp protease proteolytic subunit 1 (207 aa).

The Nucleophile role is filled by Ser-103. His-128 is an active-site residue.

Belongs to the peptidase S14 family. In terms of assembly, fourteen ClpP subunits assemble into 2 heptameric rings which stack back to back to give a disk-like structure with a central cavity, resembling the structure of eukaryotic proteasomes.

It localises to the cytoplasm. It catalyses the reaction Hydrolysis of proteins to small peptides in the presence of ATP and magnesium. alpha-casein is the usual test substrate. In the absence of ATP, only oligopeptides shorter than five residues are hydrolyzed (such as succinyl-Leu-Tyr-|-NHMec, and Leu-Tyr-Leu-|-Tyr-Trp, in which cleavage of the -Tyr-|-Leu- and -Tyr-|-Trp bonds also occurs).. Its function is as follows. Cleaves peptides in various proteins in a process that requires ATP hydrolysis. Has a chymotrypsin-like activity. Plays a major role in the degradation of misfolded proteins. The sequence is that of ATP-dependent Clp protease proteolytic subunit 1 from Tropheryma whipplei (strain Twist) (Whipple's bacillus).